The sequence spans 146 residues: Acidic phospholipase A2 C (146 aa).

The signal sequence occupies residues 1–21; that stretch reads MNPAHLLILAAVCVSPLGASS. A propeptide spanning residues 22–27 is cleaved from the precursor; the sequence is NRPMPL. 7 disulfides stabilise this stretch: C38–C98, C53–C145, C55–C71, C70–C126, C77–C119, C87–C112, and C105–C117. Residues Y54, G56, and G58 each contribute to the Ca(2+) site. H74 is a catalytic residue. D75 is a Ca(2+) binding site. The active site involves D120.

The protein belongs to the phospholipase A2 family. Group I subfamily. D49 sub-subfamily. It depends on Ca(2+) as a cofactor. In terms of tissue distribution, expressed by the venom gland.

Its subcellular location is the secreted. It carries out the reaction a 1,2-diacyl-sn-glycero-3-phosphocholine + H2O = a 1-acyl-sn-glycero-3-phosphocholine + a fatty acid + H(+). Its function is as follows. PLA2 catalyzes the calcium-dependent hydrolysis of the 2-acyl groups in 3-sn-phosphoglycerides. This is Acidic phospholipase A2 C from Naja sputatrix (Malayan spitting cobra).